The sequence spans 93 residues: uncharacterized protein (93 aa).

This is an uncharacterized protein from Pasteurella multocida (strain Pm70).